A 147-amino-acid polypeptide reads, in one-letter code: MASTRVLASRLASQMAASAKVARPAVRVAQVSKRTIQTGSPLQTLKRTQMTSIVNATTRQAFQKRAYSSEIAQAMVEVSKNLGMGSAAIGLTGAGIGIGLVFAALLNGVARNPALRGQLFSYAILGFAFVEAIGLFDLMVALMAKFT.

The N-terminal 66 residues, 1-66, are a transit peptide targeting the mitochondrion; the sequence is MASTRVLASR…TTRQAFQKRA (66 aa). Transmembrane regions (helical) follow at residues 86 to 106 and 123 to 143; these read SAAIGLTGAGIGIGLVFAALL and AILGFAFVEAIGLFDLMVALM.

This sequence belongs to the ATPase C chain family. In terms of assembly, F-type ATPases have 2 components, CF(1) - the catalytic core - and CF(0) - the membrane proton channel. CF(1) has five subunits: alpha(3), beta(3), gamma(1), delta(1), epsilon(1). CF(0) has three main subunits: a, b and c.

It is found in the mitochondrion membrane. In terms of biological role, mitochondrial membrane ATP synthase (F(1)F(0) ATP synthase or Complex V) produces ATP from ADP in the presence of a proton gradient across the membrane which is generated by electron transport complexes of the respiratory chain. F-type ATPases consist of two structural domains, F(1) - containing the extramembraneous catalytic core and F(0) - containing the membrane proton channel, linked together by a central stalk and a peripheral stalk. During catalysis, ATP synthesis in the catalytic domain of F(1) is coupled via a rotary mechanism of the central stalk subunits to proton translocation. Part of the complex F(0) domain. A homomeric c-ring of probably 10 subunits is part of the complex rotary element. The chain is ATP synthase subunit 9, mitochondrial (oli) from Neurospora crassa (strain ATCC 24698 / 74-OR23-1A / CBS 708.71 / DSM 1257 / FGSC 987).